The sequence spans 414 residues: MAAAPPSYCFVAFPPRAKDGLVVFGKNSARPRDEVQEVVYFSAADHEPESKVECTYISIDQVPRTYAIMISRPAWLWGAEMGANEHGVCIANEAINTREPAAEIEALLGMDLVRLGLERGETAKEALDVIVSLLEEHGQGGNYFEDANSCHSFQSAYLIVDRDEAWVLETIGKYWAAEKVTEGVRCICSQLSLTTKMDAEHPELRSYAQSQGWWTGEGEFNFSEVFSPVEDHLDCGAGKDSLEKQEESITVQTMMNTLRDKASGVCIDSEFFLTTASGVSVLPQNRSSPCIHYFTGTPDPSRSIFKPFIFVDDVKLVPKTQSPCFGDDDPAKKEPRFQEKPDRRHELYKAHEWARAIIESDQEQGRKLRSTMLELEKQGLEAMEEILTSSEPLDPAEVGDLFYDCVDTEIKFFK.

Ala-2 carries the N-acetylalanine modification. The active site involves Cys-9.

Belongs to the peptidase C69 family. Secernin subfamily.

It is found in the cytoplasm. In terms of biological role, regulates exocytosis in mast cells. Increases both the extent of secretion and the sensitivity of mast cells to stimulation with calcium. This chain is Secernin-1 (SCRN1), found in Homo sapiens (Human).